A 95-amino-acid chain; its full sequence is Small ribosomal subunit protein uS15 (95 aa).

This sequence belongs to the universal ribosomal protein uS15 family. Part of the 30S ribosomal subunit. Forms a bridge to the 50S subunit in the 70S ribosome, contacting the 23S rRNA.

Functionally, one of the primary rRNA binding proteins, it binds directly to 16S rRNA where it helps nucleate assembly of the platform of the 30S subunit by binding and bridging several RNA helices of the 16S rRNA. In terms of biological role, forms an intersubunit bridge (bridge B4) with the 23S rRNA of the 50S subunit in the ribosome. This is Small ribosomal subunit protein uS15 from Streptomyces avermitilis (strain ATCC 31267 / DSM 46492 / JCM 5070 / NBRC 14893 / NCIMB 12804 / NRRL 8165 / MA-4680).